The sequence spans 547 residues: Glucose-6-phosphate isomerase (547 aa).

Glu-351 acts as the Proton donor in catalysis. Active-site residues include His-382 and Lys-509.

This sequence belongs to the GPI family.

Its subcellular location is the cytoplasm. It catalyses the reaction alpha-D-glucose 6-phosphate = beta-D-fructose 6-phosphate. Its pathway is carbohydrate biosynthesis; gluconeogenesis. It participates in carbohydrate degradation; glycolysis; D-glyceraldehyde 3-phosphate and glycerone phosphate from D-glucose: step 2/4. Functionally, catalyzes the reversible isomerization of glucose-6-phosphate to fructose-6-phosphate. The sequence is that of Glucose-6-phosphate isomerase from Coxiella burnetii (strain CbuK_Q154) (Coxiella burnetii (strain Q154)).